Consider the following 133-residue polypeptide: Small ribosomal subunit protein uS11 (133 aa).

It belongs to the universal ribosomal protein uS11 family. Part of the 30S ribosomal subunit.

In terms of biological role, located on the platform of the 30S subunit. The chain is Small ribosomal subunit protein uS11 from Pyrobaculum aerophilum (strain ATCC 51768 / DSM 7523 / JCM 9630 / CIP 104966 / NBRC 100827 / IM2).